A 115-amino-acid polypeptide reads, in one-letter code: T cell receptor beta variable 11-2 (115 aa).

The N-terminal stretch at 1-21 (MGTRLLCWAALCLLGAELTEA) is a signal peptide. Positions 22 to 115 (GVAQSPRYKI…SAVYLCASSL (94 aa)) constitute an Ig-like domain. Cys-42 and Cys-111 are oxidised to a cystine.

Alpha-beta TR is a heterodimer composed of an alpha and beta chain; disulfide-linked. The alpha-beta TR is associated with the transmembrane signaling CD3 coreceptor proteins to form the TR-CD3 (TcR or TCR). The assembly of alpha-beta TR heterodimers with CD3 occurs in the endoplasmic reticulum where a single alpha-beta TR heterodimer associates with one CD3D-CD3E heterodimer, one CD3G-CD3E heterodimer and one CD247 homodimer forming a stable octameric structure. CD3D-CD3E and CD3G-CD3E heterodimers preferentially associate with TR alpha and TR beta chains, respectively. The association of the CD247 homodimer is the last step of TcR assembly in the endoplasmic reticulum and is required for transport to the cell surface.

It is found in the cell membrane. Functionally, v region of the variable domain of T cell receptor (TR) beta chain that participates in the antigen recognition. Alpha-beta T cell receptors are antigen specific receptors which are essential to the immune response and are present on the cell surface of T lymphocytes. Recognize peptide-major histocompatibility (MH) (pMH) complexes that are displayed by antigen presenting cells (APC), a prerequisite for efficient T cell adaptive immunity against pathogens. Binding of alpha-beta TR to pMH complex initiates TR-CD3 clustering on the cell surface and intracellular activation of LCK that phosphorylates the ITAM motifs of CD3G, CD3D, CD3E and CD247 enabling the recruitment of ZAP70. In turn ZAP70 phosphorylates LAT, which recruits numerous signaling molecules to form the LAT signalosome. The LAT signalosome propagates signal branching to three major signaling pathways, the calcium, the mitogen-activated protein kinase (MAPK) kinase and the nuclear factor NF-kappa-B (NF-kB) pathways, leading to the mobilization of transcription factors that are critical for gene expression and essential for T cell growth and differentiation. The T cell repertoire is generated in the thymus, by V-(D)-J rearrangement. This repertoire is then shaped by intrathymic selection events to generate a peripheral T cell pool of self-MH restricted, non-autoaggressive T cells. Post-thymic interaction of alpha-beta TR with the pMH complexes shapes TR structural and functional avidity. This Homo sapiens (Human) protein is T cell receptor beta variable 11-2.